We begin with the raw amino-acid sequence, 315 residues long: uncharacterized protein (315 aa).

This sequence belongs to the carbohydrate kinase PfkB family.

This is an uncharacterized protein from Escherichia coli (strain K12).